The following is a 107-amino-acid chain: Quaternary ammonium compound-resistance protein QacC (107 aa).

Topologically, residues 1–2 are cytoplasmic; the sequence is MP. The helical transmembrane segment at 3–20 threads the bilayer; it reads YIYLIIAISTEVIGSAFL. Over 21 to 29 the chain is Extracellular; the sequence is KSSEGFSKF. A helical membrane pass occupies residues 30-47; sequence IPSLGTIISFGICFYFLS. Over 48-56 the chain is Cytoplasmic; that stretch reads KTMQHLPLN. The chain crosses the membrane as a helical span at residues 57–75; it reads ITYATWAGLGLVLTTVVSI. Residues 76–85 lie on the Extracellular side of the membrane; the sequence is IIFKEQINLI. A helical membrane pass occupies residues 86–103; sequence TIVSIVLIIVGVVSLNIF. The Cytoplasmic segment spans residues 104–107; sequence GTSH.

Belongs to the drug/metabolite transporter (DMT) superfamily. Small multidrug resistance (SMR) (TC 2.A.7.1) family.

It is found in the cell membrane. With respect to regulation, ethidium export is inhibited by N-ethylmaleimide (NEM). Multidrug exporter. Is implicated for the resistance to bacteriocidal quaternary ammonium compounds and ethidium bromide. The sequence is that of Quaternary ammonium compound-resistance protein QacC from Staphylococcus aureus.